The sequence spans 288 residues: Shikimate dehydrogenase (NADP(+)) (288 aa).

Residues Ser15–Ser17 and Thr64 each bind shikimate. The active-site Proton acceptor is Lys68. Glu83 provides a ligand contact to NADP(+). Residues Asn92 and Asp117 each coordinate shikimate. NADP(+)-binding positions include Gly141–Ala145, Asn165–Lys170, and Met232. Tyr234 is a shikimate binding site. Gly254 contributes to the NADP(+) binding site.

It belongs to the shikimate dehydrogenase family. In terms of assembly, homodimer.

The catalysed reaction is shikimate + NADP(+) = 3-dehydroshikimate + NADPH + H(+). The protein operates within metabolic intermediate biosynthesis; chorismate biosynthesis; chorismate from D-erythrose 4-phosphate and phosphoenolpyruvate: step 4/7. Its function is as follows. Involved in the biosynthesis of the chorismate, which leads to the biosynthesis of aromatic amino acids. Catalyzes the reversible NADPH linked reduction of 3-dehydroshikimate (DHSA) to yield shikimate (SA). The protein is Shikimate dehydrogenase (NADP(+)) of Psychrobacter arcticus (strain DSM 17307 / VKM B-2377 / 273-4).